The primary structure comprises 483 residues: Acyl-coenzyme A thioesterase 2, mitochondrial (483 aa).

K104 is subject to N6-acetyllysine. Residues S294, D388, and H422 each act as charge relay system in the active site. K470 carries the N6-succinyllysine modification. Positions S481–V483 match the Microbody targeting signal motif.

This sequence belongs to the C/M/P thioester hydrolase family. As to quaternary structure, monomer. As to expression, strongest expression in heart, liver, muscle and kidney. Weak in placenta and pancreas.

It localises to the mitochondrion. The enzyme catalyses hexadecanoyl-CoA + H2O = hexadecanoate + CoA + H(+). It catalyses the reaction tetradecanoyl-CoA + H2O = tetradecanoate + CoA + H(+). The catalysed reaction is octadecanoyl-CoA + H2O = octadecanoate + CoA + H(+). It carries out the reaction eicosanoyl-CoA + H2O = eicosanoate + CoA + H(+). The enzyme catalyses decanoyl-CoA + H2O = decanoate + CoA + H(+). It catalyses the reaction dodecanoyl-CoA + H2O = dodecanoate + CoA + H(+). The catalysed reaction is (9Z)-octadecenoyl-CoA + H2O = (9Z)-octadecenoate + CoA + H(+). It carries out the reaction (9Z)-hexadecenoyl-CoA + H2O = (9Z)-hexadecenoate + CoA + H(+). The enzyme catalyses (9E)-octadecenoyl-CoA + H2O = (9E)-octadecenoate + CoA + H(+). It catalyses the reaction (9Z,12Z)-octadecadienoyl-CoA + H2O = (9Z,12Z)-octadecadienoate + CoA + H(+). It functions in the pathway lipid metabolism; fatty acid metabolism. Its function is as follows. Catalyzes the hydrolysis of acyl-CoAs into free fatty acids and coenzyme A (CoASH), regulating their respective intracellular levels. Displays higher activity toward long chain acyl CoAs (C14-C20). The enzyme is involved in enhancing the hepatic fatty acid oxidation in mitochondria. The sequence is that of Acyl-coenzyme A thioesterase 2, mitochondrial (ACOT2) from Homo sapiens (Human).